A 33-amino-acid polypeptide reads, in one-letter code: Beta-theraphotoxin-Cm1a (33 aa).

3 disulfide bridges follow: cysteine 2/cysteine 17, cysteine 9/cysteine 22, and cysteine 16/cysteine 29. Leucine amide is present on leucine 33.

Belongs to the neurotoxin 10 (Hwtx-1) family. 04 (CcoTx1) subfamily. Expressed by the venom gland.

It localises to the secreted. Inhibits many voltage-gated sodium channels and one voltage-gated calcium channel (Cav2.2/CACNA1B (IC(50)=400 nM), Nav1.2/SCN2A (IC(50)=3-70 nM), Nav1.1/SCN1A (IC(50)=523-1060 nM), Nav1.7/SCN9A (IC(50)=129.1-5120 nM), Nav1.4/SCN4A (IC(50)=263-888 nM or &gt;10 uM) and Nav1.5/SCN5A (IC(50)=188-323 nM or &gt;10 uM)). It acts by shifting the voltage dependence of channel activation to more depolarized potentials and by blocking the inward component of the sodium current. It shows moderate affinity for lipid bilayers. On Nav1.7/SCN9A, it has been shown to interact with the S3-S4 loop of domain DII (site 4). Is significantly more potent against Nav1.2/SCN2A than the other Nav channel subtypes. In vivo, this toxin causes general ataxia, lack of response to stimuli, and semiparalysis. After a few minutes, the mice are unable to stand, and breathing is reduced in rhythm and intensity. Symptoms gradually increase with progressive slowing of breathing and flaccid paralysis, death occurred within 10 to 20 minutes post injection. Animals remain totally flaccid, and no symptoms of excitatory neurotoxicity are observed. The sequence is that of Beta-theraphotoxin-Cm1a from Ceratogyrus marshalli (Straighthorned baboon tarantula).